A 40-amino-acid chain; its full sequence is Cytolysin SmT-1 (40 aa).

The segment at 3 to 12 (ALAGTIIAGA) is plays an important role in the hemolytic activity. The N-terminal region stretch occupies residues 11 to 30 (GASLGFQILDKVLGELGKVS).

It belongs to the actinoporin family. Sea anemone subfamily. In terms of assembly, octamer or nonamer in membranes. Monomer in the soluble state.

The protein localises to the secreted. It localises to the nematocyst. The protein resides in the target cell membrane. Pore-forming protein that forms cations-selective hydrophilic pores of around 1 nm and causes cardiac stimulation and cytolysis. Pore formation is a multi-step process that involves specific recognition of membrane sphingomyelin (but neither cholesterol nor phosphatidylcholine) using aromatic rich region and adjacent phosphocholine (POC) binding site, firm binding to the membrane (mainly driven by hydrophobic interactions) accompanied by the transfer of the N-terminal region to the lipid-water interface and finally pore formation after oligomerization of monomers. This toxin shows hemolytic activities. The protein is Cytolysin SmT-1 of Stichodactyla mertensii (Merten's carpet sea anemone).